A 212-amino-acid polypeptide reads, in one-letter code: ATP phosphoribosyltransferase (212 aa).

It belongs to the ATP phosphoribosyltransferase family. Short subfamily. In terms of assembly, heteromultimer composed of HisG and HisZ subunits.

It localises to the cytoplasm. It catalyses the reaction 1-(5-phospho-beta-D-ribosyl)-ATP + diphosphate = 5-phospho-alpha-D-ribose 1-diphosphate + ATP. Its pathway is amino-acid biosynthesis; L-histidine biosynthesis; L-histidine from 5-phospho-alpha-D-ribose 1-diphosphate: step 1/9. In terms of biological role, catalyzes the condensation of ATP and 5-phosphoribose 1-diphosphate to form N'-(5'-phosphoribosyl)-ATP (PR-ATP). Has a crucial role in the pathway because the rate of histidine biosynthesis seems to be controlled primarily by regulation of HisG enzymatic activity. The protein is ATP phosphoribosyltransferase of Clostridium botulinum (strain ATCC 19397 / Type A).